A 207-amino-acid chain; its full sequence is Ribosomal RNA large subunit methyltransferase E (207 aa).

S-adenosyl-L-methionine-binding residues include Gly-51, Trp-53, Asp-69, Asp-85, and Asp-108. Lys-148 serves as the catalytic Proton acceptor.

Belongs to the class I-like SAM-binding methyltransferase superfamily. RNA methyltransferase RlmE family.

Its subcellular location is the cytoplasm. The enzyme catalyses uridine(2552) in 23S rRNA + S-adenosyl-L-methionine = 2'-O-methyluridine(2552) in 23S rRNA + S-adenosyl-L-homocysteine + H(+). Its function is as follows. Specifically methylates the uridine in position 2552 of 23S rRNA at the 2'-O position of the ribose in the fully assembled 50S ribosomal subunit. This Methanospirillum hungatei JF-1 (strain ATCC 27890 / DSM 864 / NBRC 100397 / JF-1) protein is Ribosomal RNA large subunit methyltransferase E.